We begin with the raw amino-acid sequence, 284 residues long: Transmembrane protein 163b (284 aa).

Residues 1 to 44 (MTDSSSASDPTAGPVDPGPAPSAPDPALEDPASTPANGHHPNQA) form a disordered region. The Cytoplasmic portion of the chain corresponds to 1 to 83 (MTDSSSASDP…HEAQSYRKKA (83 aa)). Residues 84-104 (LWVSWVSIVVTMILAIAAFTV) form a helical membrane-spanning segment. Residues 105–111 (SIMRHSA) are Extracellular-facing. The chain crosses the membrane as a helical span at residues 112–132 (SAFGFAFDATLDVLSSIIVLW). At 133 to 145 (RYSNAAAVHSAHR) the chain is on the cytoplasmic side. Residues 146 to 166 (EYIACVILGVVFILSAITILV) traverse the membrane as a helical segment. The Extracellular segment spans residues 167-182 (KAIHDLATKLEPEVDD). The chain crosses the membrane as a helical span at residues 183–203 (FLYSVSVISGVVCTVLCVCKF). Topologically, residues 204–212 (MLGKVLTSR) are cytoplasmic. Residues 213 to 233 (ALITDGFNSLVGGVMGFSILI) traverse the membrane as a helical segment. At 234-243 (SAEVFKHEPS) the chain is on the extracellular side. The chain crosses the membrane as a helical span at residues 244–264 (VWFLDGTIGILIGLIILAYGV). The Cytoplasmic segment spans residues 265–284 (KLLKDMVPRIRQTRHYERFE).

The protein belongs to the TMEM163 family.

The protein localises to the cytoplasmic vesicle. It is found in the secretory vesicle. The protein resides in the synaptic vesicle membrane. Its subcellular location is the early endosome membrane. It localises to the late endosome membrane. The protein localises to the lysosome membrane. It is found in the cell membrane. It carries out the reaction Zn(2+)(in) = Zn(2+)(out). Functionally, zinc ion transporter that mediates zinc efflux and plays a crucial role in intracellular zinc homeostasis. Binds the divalent cations Zn(2+), Ni(2+), and to a minor extent Cu(2+). Is a functional modulator of P2X purinoceptors, including P2RX1, P2RX3, P2RX4 and P2RX7. Plays a role in central nervous system development and is required for myelination, and survival and proliferation of oligodendrocytes. This chain is Transmembrane protein 163b, found in Danio rerio (Zebrafish).